A 340-amino-acid polypeptide reads, in one-letter code: ATP-dependent 6-phosphofructokinase (340 aa).

G11 is a binding site for ATP. Residue 21-25 (RAVVR) coordinates ADP. ATP is bound by residues 72–73 (RY) and 102–105 (GDGS). Position 103 (D103) interacts with Mg(2+). 125–127 (TID) serves as a coordination point for substrate. The Proton acceptor role is filled by D127. R154 serves as a coordination point for ADP. Residues R162 and 169–171 (MGR) contribute to the substrate site. Residues 185-187 (GAD), K211, and 213-215 (KNH) contribute to the ADP site. Residues E222, R244, and 250–253 (HIQR) each bind substrate.

Belongs to the phosphofructokinase type A (PFKA) family. ATP-dependent PFK group I subfamily. Prokaryotic clade 'B1' sub-subfamily. Homotetramer. It depends on Mg(2+) as a cofactor.

The protein resides in the cytoplasm. It catalyses the reaction beta-D-fructose 6-phosphate + ATP = beta-D-fructose 1,6-bisphosphate + ADP + H(+). It functions in the pathway carbohydrate degradation; glycolysis; D-glyceraldehyde 3-phosphate and glycerone phosphate from D-glucose: step 3/4. With respect to regulation, allosterically activated by ADP and other diphosphonucleosides, and allosterically inhibited by phosphoenolpyruvate. Functionally, catalyzes the phosphorylation of D-fructose 6-phosphate to fructose 1,6-bisphosphate by ATP, the first committing step of glycolysis. The polypeptide is ATP-dependent 6-phosphofructokinase (Lactococcus lactis subsp. lactis (Streptococcus lactis)).